The primary structure comprises 161 residues: Glycine cleavage system H protein 3 (161 aa).

In terms of domain architecture, Lipoyl-binding spans T40–K122. Residue K81 is modified to N6-lipoyllysine.

Belongs to the GcvH family. In terms of assembly, the glycine cleavage system is composed of four proteins: P, T, L and H. (R)-lipoate serves as cofactor.

The glycine cleavage system catalyzes the degradation of glycine. The H protein shuttles the methylamine group of glycine from the P protein to the T protein. The sequence is that of Glycine cleavage system H protein 3 from Aquifex aeolicus (strain VF5).